A 692-amino-acid polypeptide reads, in one-letter code: Epithelial sodium channel subunit alpha (692 aa).

The interval M1–E67 is disordered. The Cytoplasmic segment spans residues M1–A108. Positions P56–T65 are enriched in low complexity. Residues F109–F129 traverse the membrane as a helical segment. The Extracellular portion of the chain corresponds to G130–S585. Cystine bridges form between C156–C328, C252–C259, C305–C312, C417–C502, C439–C479, C439–C498, C443–C494, C452–C479, C452–C502, and C454–C468. The tract at residues R198–S266 is gating release of inhibition by proteolysis (GRIP); protease-sensitive region that is responsible for the proteolytic activation of the channel. A helical transmembrane segment spans residues V586–M606. The Cytoplasmic portion of the chain corresponds to L607–P692. Residues E627–P692 form a disordered region. Polar residues predominate over residues V628–P637. Over residues G653 to A666 the composition is skewed to pro residues. Positions P663 to Y667 match the PY motif; recruits WW domain-containing proteins and is thereby required for ubiquitination and inhibition of the channel by NEDD4 and NEDD4L motif. The span at A682–P692 shows a compositional bias: low complexity.

This sequence belongs to the amiloride-sensitive sodium channel (TC 1.A.6) family. SCNN1A subfamily. As to quaternary structure, heterotrimer; containing an alpha/SCNN1A, a beta/SCNN1B and a gamma/SCNN1G subunit. Interacts with WWP1 (via WW domains). Interacts with WWP2 (via WW domains); inhibits the channel. Interacts with BPIFA1; the interaction is indirect via SCNN1B and inhibits the proteolytic processing of SCNN1A and SCNN1G and the activation of ENaC. Interacts with the full-length immature form of PCSK9 (pro-PCSK9). In terms of processing, ubiquitinated. Can be ubiquitinated at multiple sites and undergo monoubiquitination and polyubiquitination. Ubiquitination by NEDD4 or NEDD4L inhibits the ENaC channel through endocytosis, intracellular retention and degradation of its individual subunits. Post-translationally, N-glycosylated. ENaC is activated through the proteolytic maturation of its subunits. Furin cleaves the SCNN1A subunit, which results in a stepwise increase in the open probability of the channel due to the release of an inhibitory tract. BPIFA1, which is recruited by the SCNN1B subunit, prevents the proteolytic activation of ENaC.

It localises to the apical cell membrane. Its subcellular location is the cell projection. The protein resides in the cilium. The protein localises to the cytoplasmic granule. It is found in the cytoplasm. It localises to the cytoplasmic vesicle. Its subcellular location is the secretory vesicle. The protein resides in the acrosome. The protein localises to the flagellum. The enzyme catalyses Na(+)(in) = Na(+)(out). With respect to regulation, originally identified and characterized by its inhibition by the diuretic drug amiloride. This is one of the three pore-forming subunits of the heterotrimeric epithelial sodium channel (ENaC), a critical regulator of sodium balance and fluid homeostasis. ENaC operates in epithelial tissues, where it mediates the electrodiffusion of sodium ions from extracellular fluid through the apical membrane of cells, with water following osmotically. It plays a key role in maintaining sodium homeostasis through electrogenic sodium reabsorption in the kidneys. Additionally, ENaC is essential for airway surface liquid homeostasis, which is crucial for proper mucus clearance. The chain is Epithelial sodium channel subunit alpha from Pan troglodytes (Chimpanzee).